A 387-amino-acid polypeptide reads, in one-letter code: ATP phosphoribosyltransferase regulatory subunit (387 aa).

It belongs to the class-II aminoacyl-tRNA synthetase family. HisZ subfamily. Heteromultimer composed of HisG and HisZ subunits.

The protein resides in the cytoplasm. Its pathway is amino-acid biosynthesis; L-histidine biosynthesis; L-histidine from 5-phospho-alpha-D-ribose 1-diphosphate: step 1/9. Functionally, required for the first step of histidine biosynthesis. May allow the feedback regulation of ATP phosphoribosyltransferase activity by histidine. The sequence is that of ATP phosphoribosyltransferase regulatory subunit from Polynucleobacter asymbioticus (strain DSM 18221 / CIP 109841 / QLW-P1DMWA-1) (Polynucleobacter necessarius subsp. asymbioticus).